We begin with the raw amino-acid sequence, 408 residues long: Argininosuccinate synthase (408 aa).

8–16 (AYSGGLDTT) lines the ATP pocket. Y86 lines the L-citrulline pocket. G116 lines the ATP pocket. Positions 118, 122, and 123 each coordinate L-aspartate. N122 serves as a coordination point for L-citrulline. Residues R126, S177, S186, E263, and Y275 each coordinate L-citrulline.

This sequence belongs to the argininosuccinate synthase family. Type 1 subfamily. As to quaternary structure, homotetramer.

Its subcellular location is the cytoplasm. The enzyme catalyses L-citrulline + L-aspartate + ATP = 2-(N(omega)-L-arginino)succinate + AMP + diphosphate + H(+). The protein operates within amino-acid biosynthesis; L-arginine biosynthesis; L-arginine from L-ornithine and carbamoyl phosphate: step 2/3. This chain is Argininosuccinate synthase, found in Agathobacter rectalis (strain ATCC 33656 / DSM 3377 / JCM 17463 / KCTC 5835 / VPI 0990) (Eubacterium rectale).